We begin with the raw amino-acid sequence, 278 residues long: Orotidine 5'-phosphate decarboxylase (278 aa).

Substrate is bound by residues Asp40, Lys62–His64, Asp93–Thr102, Tyr228, and Arg246. The active-site Proton donor is Lys95.

This sequence belongs to the OMP decarboxylase family.

The catalysed reaction is orotidine 5'-phosphate + H(+) = UMP + CO2. It participates in pyrimidine metabolism; UMP biosynthesis via de novo pathway; UMP from orotate: step 2/2. This chain is Orotidine 5'-phosphate decarboxylase (PYR1), found in Passalora fulva (Tomato leaf mold).